The chain runs to 360 residues: MLVYLAEYLTQFYTGFNVFSYVTFRAILGLLTAMVFSLWWGPKMIERLQLLQIGQVVRNEGPESHFAKRGTPTMGGLLILAGVFISVLLWGDLGSRYVWVMLFVLGAFGLIGFIDDYRKVVRKDTKGLIARWKYILQSLAALAIAFYLYASAGSEGETQLVLPFFKDVMPQLGAFFILLAYFTIVGSSNAVNLTDGLDGLAIMPTVMVAAAFALIAYLSGHVQFANYLHIPYLPGSGELVIVCTAIVGAGLGFLWFNTYPAQVFMGDVGSLSLGAALGTIAVLVRQEILLVIMGGVFVMETVSVILQVGSYKLRGQRIFRMAPIHHHYELKGWPEPRVIVRFWIISLFLVLLGLATLKLR.

The next 10 helical transmembrane spans lie at 21–41 (YVTFRAILGLLTAMVFSLWWG), 74–94 (MGGLLILAGVFISVLLWGDLG), 97–117 (YVWVMLFVLGAFGLIGFIDDY), 134–154 (YILQSLAALAIAFYLYASAGS), 168–188 (VMPQLGAFFILLAYFTIVGSS), 199–219 (GLAIMPTVMVAAAFALIAYLS), 236–256 (SGELVIVCTAIVGAGLGFLWF), 263–283 (VFMGDVGSLSLGAALGTIAVL), 288–308 (ILLVIMGGVFVMETVSVILQV), and 338–358 (VIVRFWIISLFLVLLGLATLK).

The protein belongs to the glycosyltransferase 4 family. MraY subfamily. The cofactor is Mg(2+).

The protein resides in the cell inner membrane. The catalysed reaction is UDP-N-acetyl-alpha-D-muramoyl-L-alanyl-gamma-D-glutamyl-meso-2,6-diaminopimeloyl-D-alanyl-D-alanine + di-trans,octa-cis-undecaprenyl phosphate = di-trans,octa-cis-undecaprenyl diphospho-N-acetyl-alpha-D-muramoyl-L-alanyl-D-glutamyl-meso-2,6-diaminopimeloyl-D-alanyl-D-alanine + UMP. It functions in the pathway cell wall biogenesis; peptidoglycan biosynthesis. Its function is as follows. Catalyzes the initial step of the lipid cycle reactions in the biosynthesis of the cell wall peptidoglycan: transfers peptidoglycan precursor phospho-MurNAc-pentapeptide from UDP-MurNAc-pentapeptide onto the lipid carrier undecaprenyl phosphate, yielding undecaprenyl-pyrophosphoryl-MurNAc-pentapeptide, known as lipid I. This chain is Phospho-N-acetylmuramoyl-pentapeptide-transferase, found in Shewanella loihica (strain ATCC BAA-1088 / PV-4).